Reading from the N-terminus, the 943-residue chain is MPWTTTDYDPTDFANRRHIGPSPAEMAEMLEFVGADSLDALIDDTVPASIRQAGALDWAAMSEAELLDHMRAIADKNKPMVSMIGQGYFGTHTPPAIQRNVLENPAWYTAYTPYQPEIAQGRLEALLNFQTMVADLTGLPVANASLLDEATAAAEAMVMAQRASKSKARTFFVDETCHPQTIAVIQTRAEPLGIEVRVGDAAMLDADAVFGAIFQYPCTFGGLRDPSAQIEALHEAKAIAVVATDLLALTVLKEPGAMGADIAVGSAQRFGVPLGYGGPHAAFMSCRDALKRSLPGRIVGVSVDSHGQNAYRLSLQTREQHIRREKATSNVCTAQALLAVMASFYAVFHGPKGLRAIAERVHMRAVRLAASLSAGGFAPDNDTFFDTLTVHVGDKQSRIMAAAVARGINLRDVGADRIGISVDEVTTDAHIEAVCRAFGVLKAPAPKAPAISDDLLRMSDYLTHPIFHMNRAESEMMRYMRRLSDRDLALDRAMIPLGSCTMKLNAAVEMMPITWPEFGNLHPFAPADQAEGYAEMLEDLSAKLCDITGYDAMSMQPNSGAQGEYAGLLTIAAYHRARGETRNICLIPVSAHGTNPASAQMAGMQVVVVKSQEDGDIDLVDFRAKAEAAGDKLAACMITYPSTHGVFEESVREVCEITHELGGQVYLDGANLNAMVGLSKPGELGADVSHLNLHKTFCIPHGGGGPGMGPIGVKAHLAPHLPGHPETGGTQGPVSAAPYGSASILPISYAYVHLMGGSGLTQATKVAILGANYIAKRLEGDYGVLFKGKTGRVAHECILDTRPFAEAGITVDDIAKRLMDHGFHAPTMSWPVAGTLMVEPTESETKAELDRFITAMQAIRAEIAEVEDGLPAGDSPLHHAPHTMEDLVRDWDRAYTREQGCFPPGAFRVDKYWPPVNRVDNVAGDRNLICTCPPLEEYLDAAE.

Residue lysine 695 is modified to N6-(pyridoxal phosphate)lysine.

This sequence belongs to the GcvP family. In terms of assembly, the glycine cleavage system is composed of four proteins: P, T, L and H. The cofactor is pyridoxal 5'-phosphate.

The catalysed reaction is N(6)-[(R)-lipoyl]-L-lysyl-[glycine-cleavage complex H protein] + glycine + H(+) = N(6)-[(R)-S(8)-aminomethyldihydrolipoyl]-L-lysyl-[glycine-cleavage complex H protein] + CO2. Functionally, the glycine cleavage system catalyzes the degradation of glycine. The P protein binds the alpha-amino group of glycine through its pyridoxal phosphate cofactor; CO(2) is released and the remaining methylamine moiety is then transferred to the lipoamide cofactor of the H protein. This Jannaschia sp. (strain CCS1) protein is Glycine dehydrogenase (decarboxylating).